A 542-amino-acid chain; its full sequence is Glutamyl-tRNA(Gln) amidotransferase subunit A, mitochondrial (542 aa).

Catalysis depends on charge relay system residues lysine 55 and serine 143. Serine 167 acts as the Acyl-ester intermediate in catalysis.

The protein belongs to the amidase family. GatA subfamily. As to quaternary structure, subunit of the heterotrimeric GatCAB amidotransferase (AdT) complex, composed of A, B and C subunits.

The protein localises to the mitochondrion. It catalyses the reaction L-glutamyl-tRNA(Gln) + L-glutamine + ATP + H2O = L-glutaminyl-tRNA(Gln) + L-glutamate + ADP + phosphate + H(+). In terms of biological role, allows the formation of correctly charged Gln-tRNA(Gln) through the transamidation of misacylated Glu-tRNA(Gln) in the mitochondria. The reaction takes place in the presence of glutamine and ATP through an activated gamma-phospho-Glu-tRNA(Gln). In Neurospora crassa (strain ATCC 24698 / 74-OR23-1A / CBS 708.71 / DSM 1257 / FGSC 987), this protein is Glutamyl-tRNA(Gln) amidotransferase subunit A, mitochondrial.